Consider the following 289-residue polypeptide: 4-diphosphocytidyl-2-C-methyl-D-erythritol kinase (289 aa).

Lys-10 is a catalytic residue. Position 94-104 (94-104 (PVAAGLAGGSS)) interacts with ATP. Residue Asp-136 is part of the active site.

It belongs to the GHMP kinase family. IspE subfamily.

The catalysed reaction is 4-CDP-2-C-methyl-D-erythritol + ATP = 4-CDP-2-C-methyl-D-erythritol 2-phosphate + ADP + H(+). Its pathway is isoprenoid biosynthesis; isopentenyl diphosphate biosynthesis via DXP pathway; isopentenyl diphosphate from 1-deoxy-D-xylulose 5-phosphate: step 3/6. Catalyzes the phosphorylation of the position 2 hydroxy group of 4-diphosphocytidyl-2C-methyl-D-erythritol. The protein is 4-diphosphocytidyl-2-C-methyl-D-erythritol kinase of Bacillus licheniformis (strain ATCC 14580 / DSM 13 / JCM 2505 / CCUG 7422 / NBRC 12200 / NCIMB 9375 / NCTC 10341 / NRRL NRS-1264 / Gibson 46).